A 276-amino-acid polypeptide reads, in one-letter code: Probable endonuclease 4 (276 aa).

Zn(2+) is bound by residues H70, H108, E144, D177, H180, H211, D224, H226, and E256.

This sequence belongs to the AP endonuclease 2 family. It depends on Zn(2+) as a cofactor.

The enzyme catalyses Endonucleolytic cleavage to 5'-phosphooligonucleotide end-products.. In terms of biological role, endonuclease IV plays a role in DNA repair. It cleaves phosphodiester bonds at apurinic or apyrimidinic (AP) sites, generating a 3'-hydroxyl group and a 5'-terminal sugar phosphate. This Metamycoplasma arthritidis (strain 158L3-1) (Mycoplasma arthritidis) protein is Probable endonuclease 4.